Here is a 97-residue protein sequence, read N- to C-terminus: MNIMLFCSVFILVSLTGLSVSDDVPGNYPMSLYGNKYSCGVLGENEYCRKICKSHGVNYGYCFNSRCWCEYLEDKDVDFWAAHKNHCKNGKLYPPKK.

Positions 1–21 are cleaved as a signal peptide; it reads MNIMLFCSVFILVSLTGLSVS. Residues 25-88 form the LCN-type CS-alpha/beta domain; that stretch reads PGNYPMSLYG…FWAAHKNHCK (64 aa). Disulfide bonds link Cys-39–Cys-62, Cys-48–Cys-67, and Cys-52–Cys-69.

This sequence belongs to the long (3 C-C) scorpion toxin superfamily. As to quaternary structure, monomer (edited version) and heterodimer (non-edited version) of this alpha chain and a beta chain (AC P0CI43). In terms of tissue distribution, expressed by the venom gland.

Its subcellular location is the secreted. Its function is as follows. The heterodimer non-edited LVP1 induces lipolysis in rat adipocytes. Induction of lipolysis by LVP1 appears to be mediated through the beta-2 adrenergic receptor pathway (ADRB2). The edited BmKBTx-like, similar to beta-toxins, may modulate voltage-gated sodium channels (Nav) and may block voltage-gated potassium channels (Kv). This chain is Lipolysis-activating peptide 1-alpha chain, found in Lychas mucronatus (Chinese swimming scorpion).